We begin with the raw amino-acid sequence, 411 residues long: LL-diaminopimelate aminotransferase (411 aa).

Residues tyrosine 15 and glycine 42 each contribute to the substrate site. Residues tyrosine 72, 108–109 (SK), tyrosine 132, asparagine 187, tyrosine 218, and 246–248 (SFS) each bind pyridoxal 5'-phosphate. Lysine 109, tyrosine 132, and asparagine 187 together coordinate substrate. N6-(pyridoxal phosphate)lysine is present on lysine 249. The pyridoxal 5'-phosphate site is built by arginine 257 and asparagine 292. Residues asparagine 292 and arginine 388 each coordinate substrate.

The protein belongs to the class-I pyridoxal-phosphate-dependent aminotransferase family. LL-diaminopimelate aminotransferase subfamily. As to quaternary structure, homodimer. Requires pyridoxal 5'-phosphate as cofactor.

It carries out the reaction (2S,6S)-2,6-diaminopimelate + 2-oxoglutarate = (S)-2,3,4,5-tetrahydrodipicolinate + L-glutamate + H2O + H(+). It functions in the pathway amino-acid biosynthesis; L-lysine biosynthesis via DAP pathway; LL-2,6-diaminopimelate from (S)-tetrahydrodipicolinate (aminotransferase route): step 1/1. In terms of biological role, involved in the synthesis of meso-diaminopimelate (m-DAP or DL-DAP), required for both lysine and peptidoglycan biosynthesis. Catalyzes the direct conversion of tetrahydrodipicolinate to LL-diaminopimelate. The protein is LL-diaminopimelate aminotransferase of Cyanothece sp. (strain PCC 7425 / ATCC 29141).